The following is a 648-amino-acid chain: Sodium/nucleoside cotransporter 1 (648 aa).

At 1-80 (MADNTQRQRE…ARSFCREHRQ (80 aa)) the chain is on the cytoplasmic side. A helical membrane pass occupies residues 81–104 (LFGWICKGLLSTACLGFLMVACLL). At 105–109 (DLQRA) the chain is on the extracellular side. Residues 110–128 (LALLIITCVVLVFLAYDLL) form a helical membrane-spanning segment. At 129 to 147 (KRLLGSKLRRCVKFQGHSC) the chain is on the cytoplasmic side. Residues 148–167 (LSLWLKRGLALAAGVGLILW) traverse the membrane as a helical segment. The Extracellular portion of the chain corresponds to 168–178 (LSLDTAQRPEQ). A helical transmembrane segment spans residues 179 to 195 (LVSFAGICVFLVLLFAG). Over 196 to 201 (SKHHRA) the chain is Cytoplasmic. Residues 202–222 (VSWRAVSWGLGLQFVLGLFVI) form a helical membrane-spanning segment. The Extracellular portion of the chain corresponds to 223–261 (RTEPGFIAFQWLGDQIQVFLSYTEAGSSFVFGEALVKDV). The helical transmembrane segment at 262-283 (FAFQVLPIIIFFSCVMSVLYYL) threads the bilayer. Over 284–294 (GLMQWVILKIA) the chain is Cytoplasmic. Residues 295–318 (WLMQVTMGTSATETLSVAGNIFVS) form a helical membrane-spanning segment. Residues 319–337 (QTEAPLLIRPYLADMTLSE) are Extracellular-facing. Residues 338–360 (VHVVMTGGYATIAGSLLGAYISF) form a helical membrane-spanning segment. Over 361–366 (GIDAAS) the chain is Cytoplasmic. Residues 367–386 (LIAASVMAAPCALALSKLVY) form a helical membrane-spanning segment. Residues 387–423 (PEVEESKFRSENGVKLTYGDAQNLLEAASAGAAISVK) are Extracellular-facing. A helical transmembrane segment spans residues 424-446 (VVANIAANLIAFLAVLAFVNAAL). Residues 447–457 (SWLGDMVDIQG) are Cytoplasmic-facing. Residues 458-479 (LSFQLICSYVLRPVAFLMGVAW) form a helical membrane-spanning segment. Residues 480 to 534 (EDCPVVAELLGIKFFLNEFVAYQELSQYKQRRLAGAEEWLGDKKQWISVRAEILT) lie on the Extracellular side of the membrane. Residues 535–558 (TYALCGFANFSSIGIMLGGLTSLV) traverse the membrane as a helical segment. The Cytoplasmic portion of the chain corresponds to 559 to 569 (PQRRSDFSQIV). Residues 570–592 (LRALITGAFVSLLNACVAGILYV) traverse the membrane as a helical segment. Over 593-648 (PRGVEVDCVSLLNQTVSSSSFEVYLCCRQVFQSTSSEFSQVALDNCCRFYNHTVCT) the chain is Extracellular. N-linked (GlcNAc...) asparagine glycans are attached at residues Asn605 and Asn643.

This sequence belongs to the concentrative nucleoside transporter (CNT) (TC 2.A.41) family. In terms of processing, N-glycosylated. N-glycosylation is required for localization to the plasma membrane and the transporter activity. In terms of tissue distribution, expressed predominantly in the brush-border membranes of the polarized epithelial cells of jejunum and renal cortical tubules and in the bile canalicular membranes of liver parenchymal cells.

The protein localises to the cell membrane. It localises to the apical cell membrane. It catalyses the reaction uridine(out) + Na(+)(out) = uridine(in) + Na(+)(in). The catalysed reaction is thymidine(out) + Na(+)(out) = thymidine(in) + Na(+)(in). It carries out the reaction cytidine(out) + Na(+)(out) = cytidine(in) + Na(+)(in). The enzyme catalyses adenosine(out) + Na(+)(out) = adenosine(in) + Na(+)(in). With respect to regulation, due to its high apparent affinity but slow transport, adenosine could act as a negative regulator of pyrimidine transport under some conditions. In terms of biological role, sodium and pyrimidine nucleoside symporter of the plasma membrane that imports uridine, thymidine and cytidine into cells by coupling their transport to the transmembrane sodium electrochemical gradient. Also transports adenosine, an atypical substrate transported with high apparent affinity, but low maximum velocity. Therefore, exhibits the transport characteristics of the nucleoside transport system cit or N2 subtype (N2/cit). Involved in renal nucleoside (re)absorption. In Rattus norvegicus (Rat), this protein is Sodium/nucleoside cotransporter 1.